We begin with the raw amino-acid sequence, 299 residues long: Ribosomal RNA small subunit methyltransferase H (299 aa).

Residues 36 to 38 (GGH), Asp55, Tyr82, Asp103, and Gln110 each bind S-adenosyl-L-methionine. 2 stretches are compositionally biased toward basic and acidic residues: residues 269 to 282 (PVRP…ENPR) and 289 to 299 (RAAERIEEGGD). Positions 269 to 299 (PVRPSEEEIRENPRARSGRLRAAERIEEGGD) are disordered.

It belongs to the methyltransferase superfamily. RsmH family.

Its subcellular location is the cytoplasm. The catalysed reaction is cytidine(1402) in 16S rRNA + S-adenosyl-L-methionine = N(4)-methylcytidine(1402) in 16S rRNA + S-adenosyl-L-homocysteine + H(+). Its function is as follows. Specifically methylates the N4 position of cytidine in position 1402 (C1402) of 16S rRNA. The polypeptide is Ribosomal RNA small subunit methyltransferase H (Thermotoga maritima (strain ATCC 43589 / DSM 3109 / JCM 10099 / NBRC 100826 / MSB8)).